The chain runs to 316 residues: HPr kinase/phosphorylase (316 aa).

Active-site residues include His143 and Lys164. Gly158–Ser165 provides a ligand contact to ATP. Mg(2+) is bound at residue Ser165. The Proton acceptor; for phosphorylation activity. Proton donor; for dephosphorylation activity role is filled by Asp182. The segment at Leu206–Asn215 is important for the catalytic mechanism of both phosphorylation and dephosphorylation. Glu207 lines the Mg(2+) pocket. Arg251 is a catalytic residue. An important for the catalytic mechanism of dephosphorylation region spans residues Pro272–Arg277.

This sequence belongs to the HPrK/P family. As to quaternary structure, homohexamer. Mg(2+) is required as a cofactor.

The enzyme catalyses [HPr protein]-L-serine + ATP = [HPr protein]-O-phospho-L-serine + ADP + H(+). It carries out the reaction [HPr protein]-O-phospho-L-serine + phosphate + H(+) = [HPr protein]-L-serine + diphosphate. In terms of biological role, catalyzes the ATP- as well as the pyrophosphate-dependent phosphorylation of a specific serine residue in HPr, a phosphocarrier protein of the phosphoenolpyruvate-dependent sugar phosphotransferase system (PTS). HprK/P also catalyzes the pyrophosphate-producing, inorganic phosphate-dependent dephosphorylation (phosphorolysis) of seryl-phosphorylated HPr (P-Ser-HPr). This is HPr kinase/phosphorylase from Stenotrophomonas maltophilia (strain K279a).